A 279-amino-acid polypeptide reads, in one-letter code: Putative pyruvate, phosphate dikinase regulatory protein (279 aa).

Position 153-160 (153-160 (GVSRTSKT)) interacts with ADP.

The protein belongs to the pyruvate, phosphate/water dikinase regulatory protein family. PDRP subfamily.

It catalyses the reaction N(tele)-phospho-L-histidyl/L-threonyl-[pyruvate, phosphate dikinase] + ADP = N(tele)-phospho-L-histidyl/O-phospho-L-threonyl-[pyruvate, phosphate dikinase] + AMP + H(+). The catalysed reaction is N(tele)-phospho-L-histidyl/O-phospho-L-threonyl-[pyruvate, phosphate dikinase] + phosphate + H(+) = N(tele)-phospho-L-histidyl/L-threonyl-[pyruvate, phosphate dikinase] + diphosphate. Bifunctional serine/threonine kinase and phosphorylase involved in the regulation of the pyruvate, phosphate dikinase (PPDK) by catalyzing its phosphorylation/dephosphorylation. The sequence is that of Putative pyruvate, phosphate dikinase regulatory protein from Rhodopseudomonas palustris (strain HaA2).